The following is a 538-amino-acid chain: Putative ABC1 protein At2g40090 (538 aa).

The signal sequence occupies residues 1 to 26 (MAARSLWRTRTKLLVVGTALCGGSGA).

It belongs to the protein kinase superfamily. ADCK protein kinase family.

The sequence is that of Putative ABC1 protein At2g40090 from Arabidopsis thaliana (Mouse-ear cress).